The sequence spans 201 residues: 3-isopropylmalate dehydratase small subunit (201 aa).

This sequence belongs to the LeuD family. LeuD type 1 subfamily. In terms of assembly, heterodimer of LeuC and LeuD.

It catalyses the reaction (2R,3S)-3-isopropylmalate = (2S)-2-isopropylmalate. It participates in amino-acid biosynthesis; L-leucine biosynthesis; L-leucine from 3-methyl-2-oxobutanoate: step 2/4. In terms of biological role, catalyzes the isomerization between 2-isopropylmalate and 3-isopropylmalate, via the formation of 2-isopropylmaleate. This Escherichia coli O157:H7 protein is 3-isopropylmalate dehydratase small subunit.